A 464-amino-acid chain; its full sequence is Trigger factor (464 aa).

Positions 162–243 (GDFISIDLSA…VGTVKERELP (82 aa)) constitute a PPIase FKBP-type domain. The segment at 428-464 (GASVDTAELFGNGEADTEEAASTDEVASDSAEGEDQK) is disordered.

This sequence belongs to the FKBP-type PPIase family. Tig subfamily.

The protein localises to the cytoplasm. It catalyses the reaction [protein]-peptidylproline (omega=180) = [protein]-peptidylproline (omega=0). In terms of biological role, involved in protein export. Acts as a chaperone by maintaining the newly synthesized protein in an open conformation. Functions as a peptidyl-prolyl cis-trans isomerase. In Rhodococcus opacus (strain B4), this protein is Trigger factor.